The sequence spans 113 residues: Probable 4-amino-4-deoxy-L-arabinose-phosphoundecaprenol flippase subunit ArnE (113 aa).

Transmembrane regions (helical) follow at residues 40–60 (FGWLMLAALLLGIGLLLWLLV), 64–84 (LPLGVAYPLLSINFVLVTLLA), and 92–112 (VDRHHWWGIALIVIGIYLMQG).

This sequence belongs to the ArnE family. Heterodimer of ArnE and ArnF.

It is found in the cell inner membrane. It participates in bacterial outer membrane biogenesis; lipopolysaccharide biosynthesis. Functionally, translocates 4-amino-4-deoxy-L-arabinose-phosphoundecaprenol (alpha-L-Ara4N-phosphoundecaprenol) from the cytoplasmic to the periplasmic side of the inner membrane. This Pectobacterium atrosepticum (strain SCRI 1043 / ATCC BAA-672) (Erwinia carotovora subsp. atroseptica) protein is Probable 4-amino-4-deoxy-L-arabinose-phosphoundecaprenol flippase subunit ArnE.